Here is a 263-residue protein sequence, read N- to C-terminus: Small ribosomal subunit protein eS4 (263 aa).

The S4 RNA-binding domain occupies 42–104 (LPLIIFLRNR…TGEHFRLVYD (63 aa)).

It belongs to the eukaryotic ribosomal protein eS4 family. In terms of assembly, component of the small ribosomal subunit.

The protein resides in the cytoplasm. In terms of biological role, component of the small ribosomal subunit. The ribosome is a large ribonucleoprotein complex responsible for the synthesis of proteins in the cell. This Xenopus laevis (African clawed frog) protein is Small ribosomal subunit protein eS4 (rps4).